A 518-amino-acid polypeptide reads, in one-letter code: GMP synthase [glutamine-hydrolyzing] (518 aa).

Residues 11 to 203 (SILVLDFGSQ…AFDVCQAEAN (193 aa)) enclose the Glutamine amidotransferase type-1 domain. C88 (nucleophile) is an active-site residue. Active-site residues include H177 and E179. The region spanning 204 to 393 (WSMDDFIDMQ…LGMPSDLVWR (190 aa)) is the GMPS ATP-PPase domain. 231–237 (SGGVDSS) serves as a coordination point for ATP.

In terms of assembly, homodimer.

The enzyme catalyses XMP + L-glutamine + ATP + H2O = GMP + L-glutamate + AMP + diphosphate + 2 H(+). It functions in the pathway purine metabolism; GMP biosynthesis; GMP from XMP (L-Gln route): step 1/1. Its function is as follows. Catalyzes the synthesis of GMP from XMP. This Lactiplantibacillus plantarum (strain ATCC BAA-793 / NCIMB 8826 / WCFS1) (Lactobacillus plantarum) protein is GMP synthase [glutamine-hydrolyzing].